A 684-amino-acid polypeptide reads, in one-letter code: Sorbicillinoid biosynthetic cluster transcription factor 2 (684 aa).

A disordered region spans residues 114–151; the sequence is ISSAPSLETPPESVAASPPTVDSIPVSHHVNEDPEAEP.

Its subcellular location is the nucleus. Functionally, transcription factor that acts in concert with sorR1 which is a transcriptional activator of the gene cluster that mediates the biosynthesis of sorbicillinoids, a diverse group of yellow secondary metabolites that restrict growth of competing pathogenic fungi but not of bacteria. This Penicillium rubens (strain ATCC 28089 / DSM 1075 / NRRL 1951 / Wisconsin 54-1255) (Penicillium chrysogenum) protein is Sorbicillinoid biosynthetic cluster transcription factor 2.